The primary structure comprises 126 residues: MFS14 protein (126 aa).

The or 24, or 26 signal peptide spans 1-23 (MALEAATAPRALLAACLVLLVLG).

As to expression, enhanced expression in male flowers. Accumulates in the tapetum.

In Zea mays (Maize), this protein is MFS14 protein (MFS14).